Here is a 202-residue protein sequence, read N- to C-terminus: Tetranectin (202 aa).

Positions 1–21 (MELWGPCVLLCLFSLLTQVTA) are cleaved as a signal peptide. 3 disulfides stabilise this stretch: cysteine 71–cysteine 81, cysteine 98–cysteine 197, and cysteine 173–cysteine 189. Positions 77–198 (VHMKCFLAFV…CRDKLPYVCQ (122 aa)) constitute a C-type lectin domain.

Homotrimer.

The protein localises to the secreted. Functionally, tetranectin binds to plasminogen and to isolated kringle 4. May be involved in the packaging of molecules destined for exocytosis. Plays a role in retinal function. The chain is Tetranectin (CLEC3B) from Bos taurus (Bovine).